Here is a 458-residue protein sequence, read N- to C-terminus: UDP-N-acetylglucosamine 1-carboxyvinyltransferase (458 aa).

34–35 contributes to the phosphoenolpyruvate binding site; sequence KN. Arg104 provides a ligand contact to UDP-N-acetyl-alpha-D-glucosamine. Cys128 serves as the catalytic Proton donor. Position 128 is a 2-(S-cysteinyl)pyruvic acid O-phosphothioketal (Cys128). Positions 320 and 342 each coordinate UDP-N-acetyl-alpha-D-glucosamine.

This sequence belongs to the EPSP synthase family. MurA subfamily.

It is found in the cytoplasm. The catalysed reaction is phosphoenolpyruvate + UDP-N-acetyl-alpha-D-glucosamine = UDP-N-acetyl-3-O-(1-carboxyvinyl)-alpha-D-glucosamine + phosphate. Its pathway is cell wall biogenesis; peptidoglycan biosynthesis. Functionally, cell wall formation. Adds enolpyruvyl to UDP-N-acetylglucosamine. The polypeptide is UDP-N-acetylglucosamine 1-carboxyvinyltransferase (Prochlorococcus marinus (strain NATL2A)).